A 246-amino-acid chain; its full sequence is Probable transcriptional regulatory protein Dshi_2762 (246 aa).

It belongs to the TACO1 family.

It is found in the cytoplasm. This chain is Probable transcriptional regulatory protein Dshi_2762, found in Dinoroseobacter shibae (strain DSM 16493 / NCIMB 14021 / DFL 12).